Here is an 881-residue protein sequence, read N- to C-terminus: Formin-like protein 10 (881 aa).

A signal peptide spans 1–24; the sequence is MAMKRVVFLLLLVAASALVKSSRG. The segment at 194–223 is disordered; that stretch reads LTPSNSLNMEPPSPYYPSKSAHKHQGVAPP. A helical transmembrane segment spans residues 236-256; it reads VVLIAVLPTAALSFLAAFLCF. A compositionally biased stretch (polar residues) spans 333 to 346; that stretch reads TLVTGGTQENNATS. Disordered stretches follow at residues 333–427, 683–703, and 837–881; these read TLVT…EVNA, ENGR…ESLQ, and ASQK…DSND. A compositionally biased stretch (pro residues) spans 351-390; sequence LMPPPPPPPPPPPPPPPPPPPRPPPPPPPIKKGAPPPAPP. A compositionally biased stretch (low complexity) spans 400–424; it reads LSPTESSRSEESSASELASESSETE. In terms of domain architecture, FH2 spans 422-854; it reads ETEVNAPRAK…KSQANGNSNN (433 aa). Residues 692–701 show a composition bias toward polar residues; sequence STSDDNSNES. Residues 846-865 show a composition bias toward low complexity; sequence SQANGNSNNPSSQSNPQEQQ. Over residues 870–881 the composition is skewed to basic and acidic residues; sequence LDHHFDSSDSND.

The protein belongs to the formin-like family. Class-I subfamily.

It is found in the membrane. The chain is Formin-like protein 10 (FH10) from Oryza sativa subsp. japonica (Rice).